The primary structure comprises 516 residues: 2-isopropylmalate synthase (516 aa).

The region spanning 5–267 (VIIFDTTLRD…TTGIKHDEIS (263 aa)) is the Pyruvate carboxyltransferase domain. Mn(2+) is bound by residues Asp-14, His-202, His-204, and Asn-238. The regulatory domain stretch occupies residues 392 to 516 (KLNYLSVQSG…IKQKKSVATV (125 aa)).

The protein belongs to the alpha-IPM synthase/homocitrate synthase family. LeuA type 1 subfamily. As to quaternary structure, homodimer. Mn(2+) is required as a cofactor.

It is found in the cytoplasm. The enzyme catalyses 3-methyl-2-oxobutanoate + acetyl-CoA + H2O = (2S)-2-isopropylmalate + CoA + H(+). The protein operates within amino-acid biosynthesis; L-leucine biosynthesis; L-leucine from 3-methyl-2-oxobutanoate: step 1/4. Its function is as follows. Catalyzes the condensation of the acetyl group of acetyl-CoA with 3-methyl-2-oxobutanoate (2-ketoisovalerate) to form 3-carboxy-3-hydroxy-4-methylpentanoate (2-isopropylmalate). The chain is 2-isopropylmalate synthase from Vibrio cholerae serotype O1 (strain ATCC 39315 / El Tor Inaba N16961).